Reading from the N-terminus, the 465-residue chain is Alpha-2A adrenergic receptor (465 aa).

Over 1–48 (MFRQEQPLAEGSFAPMGSLQPDAGNSSWNGTEAPGGGTRATPYSLQVT) the chain is Extracellular. Residues Asn25 and Asn29 are each glycosylated (N-linked (GlcNAc...) asparagine). Residues 49-74 (LTLVCLAGLLMLFTVFGNVLVIIAVF) traverse the membrane as a helical segment. At 75-85 (TSRALKAPQNL) the chain is on the cytoplasmic side. Residues 86 to 111 (FLVSLASADILVATLVIPFSLANEVM) traverse the membrane as a helical segment. The Extracellular portion of the chain corresponds to 112 to 121 (GYWYFGKVWC). Residues Cys121 and Cys203 are joined by a disulfide bond. A helical transmembrane segment spans residues 122 to 144 (EIYLALDVLFCTSSIVHLCAISL). The Cytoplasmic segment spans residues 145–164 (DRYWSITQAIEYNLKRTPRR). The helical transmembrane segment at 165-188 (IKAIIVTVWVISAVISFPPLISIE) threads the bilayer. Residues 189-207 (KKGAGGGQQPAEPSCKIND) lie on the Extracellular side of the membrane. A helical membrane pass occupies residues 208 to 232 (QKWYVISSSIGSFFAPCLIMILVYV). Topologically, residues 233–389 (RIYQIAKRRT…RQNREKRFTF (157 aa)) are cytoplasmic. The tract at residues 242 to 378 (TRVPPSRRGP…GGGAKASRWR (137 aa)) is disordered. Positions 313 to 330 (SSEHAERPPGPRRPDRGP) are enriched in basic and acidic residues. Residue Ser346 is modified to Phosphoserine. Residues 353 to 363 (GAAGPGASGSG) show a composition bias toward gly residues. An Omega-N-methylarginine modification is found at Arg368. The chain crosses the membrane as a helical span at residues 390-414 (VLAVVIGVFVVCWFPFFFTYTLIAV). Residues 415–424 (GCPVPSQLFN) lie on the Extracellular side of the membrane. Residues 425 to 445 (FFFWFGYCNSSLNPVIYTIFN) form a helical membrane-spanning segment. Over 446-465 (HDFRRAFKKILCRGDRKRIV) the chain is Cytoplasmic. Residue Cys457 is the site of S-palmitoyl cysteine attachment.

This sequence belongs to the G-protein coupled receptor 1 family. Adrenergic receptor subfamily. ADRA2A sub-subfamily.

It localises to the cell membrane. In terms of biological role, alpha-2 adrenergic receptors mediate the catecholamine-induced inhibition of adenylate cyclase through the action of G proteins. The sequence is that of Alpha-2A adrenergic receptor from Mus musculus (Mouse).